Reading from the N-terminus, the 137-residue chain is Fluoride-specific ion channel FluC 1 (137 aa).

Helical transmembrane passes span 3 to 23, 42 to 62, 69 to 89, and 107 to 127; these read PLVV…RLVL, INVT…GHGL, ILGT…YEAV, and MMFL…LAVA. Residues Gly76 and Thr79 each coordinate Na(+).

The protein belongs to the fluoride channel Fluc/FEX (TC 1.A.43) family.

It is found in the cell membrane. The enzyme catalyses fluoride(in) = fluoride(out). With respect to regulation, na(+) is not transported, but it plays an essential structural role and its presence is essential for fluoride channel function. Its function is as follows. Fluoride-specific ion channel. Important for reducing fluoride concentration in the cell, thus reducing its toxicity. This Leifsonia xyli subsp. xyli (strain CTCB07) protein is Fluoride-specific ion channel FluC 1.